Reading from the N-terminus, the 809-residue chain is Ribonuclease Z 1 (809 aa).

Positions 74–93 are disordered; that stretch reads ISSPDTYDSSSSSSTTSVSD.

The protein belongs to the RNase Z family. It depends on Zn(2+) as a cofactor.

The protein localises to the nucleus. It is found in the cytoplasm. It catalyses the reaction Endonucleolytic cleavage of RNA, removing extra 3' nucleotides from tRNA precursor, generating 3' termini of tRNAs. A 3'-hydroxy group is left at the tRNA terminus and a 5'-phosphoryl group is left at the trailer molecule.. Zinc phosphodiesterase, which displays some tRNA 3'-processing endonuclease activity. May be involved in tRNA maturation, by removing a 3'-trailer from precursor tRNA. The sequence is that of Ribonuclease Z 1 (trz1) from Schizosaccharomyces pombe (strain 972 / ATCC 24843) (Fission yeast).